Consider the following 859-residue polypeptide: Sulfate permease 1 (859 aa).

Residues Asn-51 and Asn-93 are each glycosylated (N-linked (GlcNAc...) asparagine). 8 consecutive transmembrane segments (helical) span residues 94–114 (LTAKSAGSYLVSLFPIIKWFP), 116–136 (YNFTWGYADLVAGITVGCVLV), 148–168 (LSPEYGLYSSFIGAFIYSLFA), 173–193 (VCIGPVAVMSLQTAKVIAEVL), 206–226 (PIIATTLCLLCGIVATGLGIL), 234–254 (LISLNAVAGFMTGSAFNIIWG), 292–312 (FGLIPLVILYVWKWWCGTFGI), and 332–352 (FYFYAQAMRNAVVIVVFTAIS). Asn-358 and Asn-391 each carry an N-linked (GlcNAc...) asparagine glycan. Transmembrane regions (helical) follow at residues 395 to 415 (EIPASIIVLVLEHIAISKSFG), 428 to 448 (LIAIGVTNLIGTFFHSYPATG), 468 to 488 (VFTGGCVLLALYCLTDAFFFI), and 525 to 545 (FIVTVFITVFSSIENGIYFAM). Asn-630, Asn-653, and Asn-718 each carry an N-linked (GlcNAc...) asparagine glycan. The region spanning 630 to 808 (NTTVRPPPPG…SIIAGHSSFH (179 aa)) is the STAS domain.

The protein belongs to the SLC26A/SulP transporter (TC 2.A.53) family.

Its subcellular location is the membrane. High affinity uptake of sulfate into the cell. This is Sulfate permease 1 (SUL1) from Saccharomyces cerevisiae (strain ATCC 204508 / S288c) (Baker's yeast).